The primary structure comprises 854 residues: pH-response regulator protein palA/prr-1 (854 aa).

In terms of domain architecture, BRO1 spans 5-402 (HVLSLPFRKS…SELESMTSQL (398 aa)). A coiled-coil region spans residues 632-699 (RLDRLYESEL…DAAYYKYKEI (68 aa)). Disordered regions lie at residues 739-782 (EEEI…EPIQ) and 801-854 (PQQQ…IRFG). A compositionally biased stretch (polar residues) spans 746 to 759 (PLSSLNMHQSSFSY). The span at 767–782 (QPPPPPPQIPFPEPIQ) shows a compositional bias: pro residues. Low complexity predominate over residues 827–839 (QGQQHQQEQGQPG).

This sequence belongs to the palA/RIM20 family. Interacts with pacc-1 by binding to its two YPX[LI] motifs.

Functionally, required for the proteolytic cleavage of the transcription factor pacc-1 in response to alkaline ambient pH. May act as a scaffold protein that recruits the calpain-like protease palB/cpr-8 via snf7/vps-3 to its substrate pacc-1. The protein is pH-response regulator protein palA/prr-1 (prr-1) of Neurospora crassa (strain ATCC 24698 / 74-OR23-1A / CBS 708.71 / DSM 1257 / FGSC 987).